We begin with the raw amino-acid sequence, 388 residues long: Arrestin-C (388 aa).

This sequence belongs to the arrestin family. In terms of assembly, homodimer; disulfide-linked in response to retinal illumination. Interacts with CXCR4; the interaction is dependent on the C-terminal phosphorylation of CXCR4 and modulates the calcium ion mobilization activity of CXCR4. Interacts with GPR84. Inner and outer segments, and the inner plexiform regions of the retina.

Its subcellular location is the photoreceptor inner segment. It is found in the cell projection. It localises to the cilium. The protein localises to the photoreceptor outer segment. In terms of biological role, may play a role in an as yet undefined retina-specific signal transduction. Could bind to photoactivated-phosphorylated red/green opsins. The chain is Arrestin-C (ARR3) from Homo sapiens (Human).